The primary structure comprises 412 residues: Serine hydroxymethyltransferase (412 aa).

Residues Leu-117 and 121–123 (GHL) each bind (6S)-5,6,7,8-tetrahydrofolate. An N6-(pyridoxal phosphate)lysine modification is found at Lys-226.

It belongs to the SHMT family. In terms of assembly, homodimer. Requires pyridoxal 5'-phosphate as cofactor.

It localises to the cytoplasm. The enzyme catalyses (6R)-5,10-methylene-5,6,7,8-tetrahydrofolate + glycine + H2O = (6S)-5,6,7,8-tetrahydrofolate + L-serine. It functions in the pathway one-carbon metabolism; tetrahydrofolate interconversion. It participates in amino-acid biosynthesis; glycine biosynthesis; glycine from L-serine: step 1/1. Functionally, catalyzes the reversible interconversion of serine and glycine with tetrahydrofolate (THF) serving as the one-carbon carrier. This reaction serves as the major source of one-carbon groups required for the biosynthesis of purines, thymidylate, methionine, and other important biomolecules. Also exhibits THF-independent aldolase activity toward beta-hydroxyamino acids, producing glycine and aldehydes, via a retro-aldol mechanism. This chain is Serine hydroxymethyltransferase, found in Staphylococcus saprophyticus subsp. saprophyticus (strain ATCC 15305 / DSM 20229 / NCIMB 8711 / NCTC 7292 / S-41).